Consider the following 251-residue polypeptide: 1-(5-phosphoribosyl)-5-[(5-phosphoribosylamino)methylideneamino] imidazole-4-carboxamide isomerase (251 aa).

Residue Asp8 is the Proton acceptor of the active site. Asp131 functions as the Proton donor in the catalytic mechanism.

Belongs to the HisA/HisF family.

It is found in the cytoplasm. It carries out the reaction 1-(5-phospho-beta-D-ribosyl)-5-[(5-phospho-beta-D-ribosylamino)methylideneamino]imidazole-4-carboxamide = 5-[(5-phospho-1-deoxy-D-ribulos-1-ylimino)methylamino]-1-(5-phospho-beta-D-ribosyl)imidazole-4-carboxamide. It participates in amino-acid biosynthesis; L-histidine biosynthesis; L-histidine from 5-phospho-alpha-D-ribose 1-diphosphate: step 4/9. This chain is 1-(5-phosphoribosyl)-5-[(5-phosphoribosylamino)methylideneamino] imidazole-4-carboxamide isomerase, found in Burkholderia cenocepacia (strain HI2424).